The sequence spans 500 residues: NAD(P)H-quinone oxidoreductase chain 4, chloroplastic (500 aa).

The next 14 helical transmembrane spans lie at Phe4–Leu24, Tyr35–Phe55, Leu87–Val107, Ser111–Ser131, Leu134–Met154, Phe167–Leu187, Ile211–His231, His242–Ile262, Tyr274–Thr294, Met313–Leu333, Gln334–Asp354, Leu386–Thr406, Leu417–Leu437, and Leu462–Val482.

This sequence belongs to the complex I subunit 4 family.

It localises to the plastid. The protein localises to the chloroplast thylakoid membrane. The catalysed reaction is a plastoquinone + NADH + (n+1) H(+)(in) = a plastoquinol + NAD(+) + n H(+)(out). It carries out the reaction a plastoquinone + NADPH + (n+1) H(+)(in) = a plastoquinol + NADP(+) + n H(+)(out). This chain is NAD(P)H-quinone oxidoreductase chain 4, chloroplastic, found in Saccharum hybrid (Sugarcane).